The primary structure comprises 83 residues: Small ribosomal subunit protein bS16 (83 aa).

The protein belongs to the bacterial ribosomal protein bS16 family.

The chain is Small ribosomal subunit protein bS16 from Shewanella halifaxensis (strain HAW-EB4).